A 314-amino-acid chain; its full sequence is Solute carrier family 25 member 44 (314 aa).

3 Solcar repeats span residues 18 to 100 (KKFY…TRKF), 107 to 210 (SNTV…YAEQ), and 220 to 302 (PHIV…LKKL). The next 6 helical transmembrane spans lie at 20-42 (FYVFGVAMTMMIRVSVYPFTLIR), 71-90 (TGLYRGFLVNTFTLISGQCY), 113-133 (LVAGGSASLVAQSITVPIDVV), 185-201 (GYVASLLTYIPNSAVWW), 222-239 (IVFQAVSGPLAAATASIL), and 278-296 (LSARIISATPSTIVIVVGY).

This sequence belongs to the mitochondrial carrier (TC 2.A.29) family.

It localises to the mitochondrion membrane. The enzyme catalyses L-valine(in) = L-valine(out). The catalysed reaction is L-leucine(in) = L-leucine(out). In terms of biological role, mitochondrial solute transporter which transports branched-chain amino acid (BCAA; valine, leucine and isoleucine) into mitochondria in brown adipose tissue (BAT). BAT is involved in BCAA catabolism and actively utilizes BCAA in the mitochondria for thermogenesis. This is Solute carrier family 25 member 44 from Homo sapiens (Human).